A 160-amino-acid polypeptide reads, in one-letter code: Sec-independent protein translocase protein TatB (160 aa).

The helical transmembrane segment at 1-21 (MFGMGFFEILVVLVVAIIFLG) threads the bilayer. The segment at 118-160 (HLNEEVSNEEALNKEVSSDESPKEVQLATDNNTKEHDKEKEHV) is disordered. Composition is skewed to basic and acidic residues over residues 128-140 (ALNKEVSSDESPK) and 149-160 (NTKEHDKEKEHV).

This sequence belongs to the TatB family. In terms of assembly, the Tat system comprises two distinct complexes: a TatABC complex, containing multiple copies of TatA, TatB and TatC subunits, and a separate TatA complex, containing only TatA subunits. Substrates initially bind to the TatABC complex, which probably triggers association of the separate TatA complex to form the active translocon.

It localises to the cell inner membrane. Its function is as follows. Part of the twin-arginine translocation (Tat) system that transports large folded proteins containing a characteristic twin-arginine motif in their signal peptide across membranes. Together with TatC, TatB is part of a receptor directly interacting with Tat signal peptides. TatB may form an oligomeric binding site that transiently accommodates folded Tat precursor proteins before their translocation. The chain is Sec-independent protein translocase protein TatB from Helicobacter pylori (strain HPAG1).